Consider the following 290-residue polypeptide: Picrinine-N-methytransferase TMT4 (290 aa).

The segment at 71–80 (MLDVGCGIGG) is SAM motif I. The Vacuolar targeting signal motif lies at 133 to 139 (DGTFDVV). The segment at 134–142 (GTFDVVFTI) is SAM motif II. The interval 161-170 (VAAPGAAIVI) is SAM motif III.

The protein belongs to the class I-like SAM-binding methyltransferase superfamily. gTMT family. In terms of assembly, homodimer.

It is found in the vacuole membrane. The enzyme catalyses picrinine + S-adenosyl-L-methionine = ervincine + S-adenosyl-L-homocysteine + H(+). The protein operates within alkaloid biosynthesis; vindoline biosynthesis. Its function is as follows. S-adenosyl-L-methionine-dependent N-methyltransferase involved in the biosynthesis of biologically active monoterpenoid indole alkaloids (MIAs) natural products including vindoline. Catalyzes the conversion of picrinine to N-methylpicrinine (ervincine). The chain is Picrinine-N-methytransferase TMT4 from Catharanthus roseus (Madagascar periwinkle).